The chain runs to 972 residues: Mast/stem cell growth factor receptor Kit (972 aa).

The signal sequence occupies residues Met1 to Ser25. The Extracellular portion of the chain corresponds to Gln26–Pro520. Ig-like C2-type domains lie at Pro27–Arg112, Asp121–Arg205, Pro212–Val308, Pro317–Asn410, and Pro413–Ala507. Cystine bridges form between Cys58/Cys97, Cys136/Cys186, Cys151/Cys183, and Cys233/Cys290. 2 N-linked (GlcNAc...) asparagine glycosylation sites follow: Asn94 and Asn145. 9 N-linked (GlcNAc...) asparagine glycosylation sites follow: Asn283, Asn293, Asn300, Asn320, Asn352, Asn367, Asn400, Asn463, and Asn486. A disulfide bridge links Cys428 with Cys491. A helical transmembrane segment spans residues Leu521–Tyr541. Residues Lys542–Val972 are Cytoplasmic-facing. Residues Tyr543, Tyr549, Tyr564, and Tyr566 each carry the phosphotyrosine; by autocatalysis modification. Tyr564 provides a ligand contact to Mg(2+). The segment at Tyr564–Tyr566 is important for interaction with phosphotyrosine-binding proteins. In terms of domain architecture, Protein kinase spans Leu585–Ser933. Residues Gly592–Val599, Lys619, and Glu667–Asp673 contribute to the ATP site. Tyr699, Tyr717, and Tyr726 each carry phosphotyrosine; by autocatalysis. Phosphoserine; by PKC/PRKCA is present on residues Ser737 and Ser742. Catalysis depends on Asp788, which acts as the Proton acceptor. Arg792 contributes to the ATP binding site. Mg(2+) contacts are provided by Asn793 and Asp806. At Ser817 the chain carries Phosphoserine. At Tyr819 the chain carries Phosphotyrosine; by autocatalysis. The residue at position 887 (Ser887) is a Phosphoserine. 2 positions are modified to phosphotyrosine; by autocatalysis: Tyr896 and Tyr932. Ser955 carries the phosphoserine modification.

Belongs to the protein kinase superfamily. Tyr protein kinase family. CSF-1/PDGF receptor subfamily. Monomer in the absence of bound KITLG/SCF. Homodimer in the presence of bound KITLG/SCF, forming a heterotetramer with two KITLG/SCF molecules. Interacts (via phosphorylated tyrosine residues) with the adapter proteins GRB2 and GRB7 (via SH2 domain), and SH2B2/APS. Interacts (via C-terminus) with MPDZ (via the tenth PDZ domain). Interacts (via phosphorylated tyrosine residues) with PIK3R1 and PIK3 catalytic subunit. Interacts (via phosphorylated tyrosine) with CRK (isoform Crk-II), FYN, SHC1 and MATK/CHK (via SH2 domain). Interacts with LYN and FES/FPS. Interacts (via phosphorylated tyrosine residues) with the protein phosphatases PTPN6/SHP-1 (via SH2 domain), PTPN11/SHP-2 (via SH2 domain) and PTPRU. Interacts with PLCG1. Interacts with DOK1 and TEC. Interacts with IL1RAP (independent of stimulation with KITLG/SCF). A mast cell-specific KITLG/SCF-induced interleukin-33 signaling complex contains IL1RL1, IL1RAP, KIT and MYD88. Ubiquitinated by SOCS6. KIT is rapidly ubiquitinated after autophosphorylation induced by KITLG/SCF binding, leading to internalization and degradation. Post-translationally, autophosphorylated on tyrosine residues. KITLG/SCF binding promotes autophosphorylation. Phosphorylated tyrosine residues are important for interaction with specific binding partners.

Its subcellular location is the cell membrane. The catalysed reaction is L-tyrosyl-[protein] + ATP = O-phospho-L-tyrosyl-[protein] + ADP + H(+). Its activity is regulated as follows. Present in an inactive conformation in the absence of bound ligand. KITLG/SCF binding leads to dimerization and activation by autophosphorylation on tyrosine residues. Activity is down-regulated by PRKCA-mediated phosphorylation on serine residues. In terms of biological role, tyrosine-protein kinase that acts as a cell-surface receptor for the cytokine KITLG/SCF and plays an essential role in the regulation of cell survival and proliferation, hematopoiesis, stem cell maintenance, gametogenesis, mast cell development, migration and function, and in melanogenesis. In response to KITLG/SCF binding, KIT can activate several signaling pathways. Phosphorylates PIK3R1, PLCG1, SH2B2/APS and CBL. Activates the AKT1 signaling pathway by phosphorylation of PIK3R1, the regulatory subunit of phosphatidylinositol 3-kinase. Activated KIT also transmits signals via GRB2 and activation of RAS, RAF1 and the MAP kinases MAPK1/ERK2 and/or MAPK3/ERK1. Promotes activation of STAT family members STAT1, STAT3, STAT5A and STAT5B. Activation of PLCG1 leads to the production of the cellular signaling molecules diacylglycerol and inositol 1,4,5-trisphosphate. KIT signaling is modulated by protein phosphatases, and by rapid internalization and degradation of the receptor. Activated KIT promotes phosphorylation of the protein phosphatases PTPN6/SHP-1 and PTPRU, and of the transcription factors STAT1, STAT3, STAT5A and STAT5B. Promotes phosphorylation of PIK3R1, CBL, CRK (isoform Crk-II), LYN, MAPK1/ERK2 and/or MAPK3/ERK1, PLCG1, SRC and SHC1. The sequence is that of Mast/stem cell growth factor receptor Kit (KIT) from Sus scrofa (Pig).